The sequence spans 787 residues: Putative pentatricopeptide repeat-containing protein At1g69350, mitochondrial (787 aa).

A mitochondrion-targeting transit peptide spans 1–16 (MTQYMPLFRSCSSLRL). 19 PPR repeats span residues 33 to 63 (DPLPVTKLIESYAFMGSPDSSRLVFEAFPYP), 64 to 98 (DSFMYGVLIKCNVWCHLLDAAIDLYHRLVSETTQI), 99 to 134 (SKFVFPSVLRACAGSREHLSVGGKVHGRIIKGGVDD), 135 to 165 (DAVIETSLLCMYGQTGNLSDAEKVFDGMPVR), 166 to 200 (DLVAWSTLVSSCLENGEVVKALRMFKCMVDDGVEP), 201 to 235 (DAVTMISVVEGCAELGCLRIARSVHGQITRKMFDL), 236 to 266 (DETLCNSLLTMYSKCGDLLSSERIFEKIAKK), 267 to 301 (NAVSWTAMISSYNRGEFSEKALRSFSEMIKSGIEP), 302 to 336 (NLVTLYSVLSSCGLIGLIREGKSVHGFAVRRELDP), 338 to 368 (YESLSLALVELYAECGKLSDCETVLRVVSDR), 369 to 403 (NIVAWNSLISLYAHRGMVIQALGLFRQMVTQRIKP), 404 to 434 (DAFTLASSISACENAGLVPLGKQIHGHVIRT), 438 to 468 (DEFVQNSLIDMYSKSGSVDSASTVFNQIKHR), 469 to 503 (SVVTWNSMLCGFSQNGNSVEAISLFDYMYHSYLEM), 504 to 534 (NEVTFLAVIQACSSIGSLEKGKWVHHKLIIS), 538 to 568 (DLFTDTALIDMYAKCGDLNAAETVFRAMSSR), 569 to 603 (SIVSWSSMINAYGMHGRIGSAISTFNQMVESGTKP), 604 to 638 (NEVVFMNVLSACGHSGSVEEGKYYFNLMKSFGVSP), and 639 to 669 (NSEHFACFIDLLSRSGDLKEAYRTIKEMPFL). The segment at 674 to 749 (VWGSLVNGCR…VPGYSAIEID (76 aa)) is type E motif. A type E(+) motif region spans residues 750–780 (QKVFRFGAGEENRIQTDEIYRFLGNLQNLTN).

Belongs to the PPR family. PCMP-E subfamily.

The protein localises to the mitochondrion. The sequence is that of Putative pentatricopeptide repeat-containing protein At1g69350, mitochondrial (PCMP-E66) from Arabidopsis thaliana (Mouse-ear cress).